The primary structure comprises 452 residues: Scaffold protein ILK (452 aa).

5 ANK repeats span residues 2 to 30 (DDIF…LNQG), 31 to 63 (DDHG…INVM), 64 to 96 (NRGD…INAV), 97 to 129 (NEHG…VSIA), and 130 to 174 (NKYS…GTTR). The 254-residue stretch at 193 to 446 (LSLSQKLNEN…PKFDMIVPIL (254 aa)) folds into the Protein kinase domain. ATP is bound by residues asparagine 200, asparagine 202, serine 204, histidine 270, methionine 272, and asparagine 279. Aspartate 339 contributes to the Mg(2+) binding site. Lysine 341 contributes to the ATP binding site. The Nuclear localization signal motif lies at 363–371 (KKPEEINRR).

It belongs to the protein kinase superfamily. TKL Ser/Thr protein kinase family. Interacts with PXN/PAXILLIN (via LD motif 4).

The protein resides in the cell junction. The protein localises to the focal adhesion. Its subcellular location is the cell membrane. It localises to the cell projection. It is found in the lamellipodium. The protein resides in the cytoplasm. The protein localises to the myofibril. Its subcellular location is the sarcomere. It localises to the nucleus. It is found in the cytoskeleton. The protein resides in the microtubule organizing center. The protein localises to the centrosome. Its subcellular location is the cell cortex. Scaffold protein which mediates protein-protein interactions during a range of cellular events including focal adhesion assembly, cell adhesion and cell migration. This is Scaffold protein ILK from Gallus gallus (Chicken).